The chain runs to 357 residues: Serine/threonine-protein kinase nekl-2 (357 aa).

The Protein kinase domain occupies 4–267 (YEKVRVVGRG…VSQLLSDPLV (264 aa)). ATP is bound by residues 10–18 (VGRGAFGVC) and lysine 35. Aspartate 137 serves as the catalytic Proton acceptor. The span at 281 to 290 (IEPPPTDKRK) shows a compositional bias: basic and acidic residues. The tract at residues 281 to 357 (IEPPPTDKRK…QSRSQVHSKY (77 aa)) is disordered. Composition is skewed to polar residues over residues 293–327 (ASLSSRLRTYPTQSTLRPYSLSSNAPTTHLTQLTP) and 336–357 (FFSSGRTSNQRTQSRSQVHSKY).

The protein belongs to the protein kinase superfamily. NEK Ser/Thr protein kinase family. NIMA subfamily. It depends on Mg(2+) as a cofactor. Expressed in hypodermal cells including in hyp7 syncytium but not in seam cells.

It localises to the cytoplasm. It catalyses the reaction L-seryl-[protein] + ATP = O-phospho-L-seryl-[protein] + ADP + H(+). It carries out the reaction L-threonyl-[protein] + ATP = O-phospho-L-threonyl-[protein] + ADP + H(+). Functionally, probable serine/threonine-protein kinase required for the completion of molting. May play a role in endocytosis in the hypodermis syncytium. This is Serine/threonine-protein kinase nekl-2 from Caenorhabditis elegans.